The primary structure comprises 354 residues: Fe(3+) ions import ATP-binding protein FbpC (354 aa).

An ABC transporter domain is found at L4 to L236. G36–T43 contributes to the ATP binding site.

The protein belongs to the ABC transporter superfamily. Fe(3+) ion importer (TC 3.A.1.10) family. In terms of assembly, the complex is composed of two ATP-binding proteins (FbpC), two transmembrane proteins (FbpB) and a solute-binding protein (FbpA).

It is found in the cell inner membrane. It catalyses the reaction Fe(3+)(out) + ATP + H2O = Fe(3+)(in) + ADP + phosphate + H(+). Part of the ABC transporter complex FbpABC involved in Fe(3+) ions import. Responsible for energy coupling to the transport system. This is Fe(3+) ions import ATP-binding protein FbpC from Pseudomonas fluorescens (strain ATCC BAA-477 / NRRL B-23932 / Pf-5).